A 406-amino-acid chain; its full sequence is Tryptophan synthase beta chain (406 aa).

Lys99 is modified (N6-(pyridoxal phosphate)lysine).

The protein belongs to the TrpB family. Tetramer of two alpha and two beta chains. The cofactor is pyridoxal 5'-phosphate.

The enzyme catalyses (1S,2R)-1-C-(indol-3-yl)glycerol 3-phosphate + L-serine = D-glyceraldehyde 3-phosphate + L-tryptophan + H2O. It functions in the pathway amino-acid biosynthesis; L-tryptophan biosynthesis; L-tryptophan from chorismate: step 5/5. Its function is as follows. The beta subunit is responsible for the synthesis of L-tryptophan from indole and L-serine. The polypeptide is Tryptophan synthase beta chain (Allorhizobium ampelinum (strain ATCC BAA-846 / DSM 112012 / S4) (Agrobacterium vitis (strain S4))).